The primary structure comprises 262 residues: Putative ankyrin repeat protein FPV243 (262 aa).

One copy of the ANK repeat lies at 25 to 54; that stretch reads YGSTPLFEAICNCSCKNVKLFLENNADINE.

This Vertebrata (FPV) protein is Putative ankyrin repeat protein FPV243.